Reading from the N-terminus, the 56-residue chain is MAKNANRVKIGLKCSECGDINYTTYKNNKNTANKIELKKYCPRLKKHTVHKEIKLK.

This sequence belongs to the bacterial ribosomal protein bL33 family.

This Campylobacter hominis (strain ATCC BAA-381 / DSM 21671 / CCUG 45161 / LMG 19568 / NCTC 13146 / CH001A) protein is Large ribosomal subunit protein bL33.